The chain runs to 303 residues: Protease HtpX (303 aa).

Transmembrane regions (helical) follow at residues 4–24 (IGLFLLTNLAVLVVFSIVFGI) and 42–62 (IASLAVMCAVYGMIGSMISLF). A Zn(2+)-binding site is contributed by H149. The active site involves E150. Residue H153 coordinates Zn(2+). 2 helical membrane passes run 157–177 (GDMVTLALIQGVVNAFVMFFA) and 200–220 (FVTSIVMDILLGFLASAIVMW). E226 lines the Zn(2+) pocket.

The protein belongs to the peptidase M48B family. Zn(2+) is required as a cofactor.

It is found in the cell inner membrane. This is Protease HtpX from Psychrobacter sp. (strain PRwf-1).